The sequence spans 5488 residues: Polyketide synthase PksN (5488 aa).

The interval 3–301 (RQLKSPLSEG…NMMAVRSKNI (299 aa)) is condensation. The stretch at 165–205 (QQPSTADYYDFVDWENRMLTGREGEEHLAYWKEQLSGSLPV) is one WD 1 repeat. The segment at 493–903 (TYKEVDEKST…EFPGILDQAV (411 aa)) is adenylation. The stretch at 965–1006 (RKELEKREIVFNRRKPNHLQLTEIEDQVLRIWEETLKVSGFG) is one WD 2 repeat. Positions 983 to 1058 (LQLTEIEDQV…AISEYILEMK (76 aa)) constitute a Carrier 1 domain. At S1018 the chain carries O-(pantetheine 4'-phosphoryl)serine. The 427-residue stretch at 1089–1515 (DDSVAIVGIS…GTNAHAIFEQ (427 aa)) folds into the Ketosynthase family 3 (KS3) 1 domain. Residues C1261, H1397, and H1437 each act as for beta-ketoacyl synthase 1 activity in the active site. The interval 1700–1826 (HPLVHHNTSV…GKAELIQLKR (127 aa)) is N-terminal hotdog fold 1. A PKS/mFAS DH 1 domain is found at 1700-1992 (HPLVHHNTSV…TRVMEADIQT (293 aa)). The active-site Proton acceptor; for dehydratase activity 1 is the H1729. The tract at residues 1840–1992 (DQSKMDAASF…TRVMEADIQT (153 aa)) is C-terminal hotdog fold 1. The Proton donor; for dehydratase activity 1 role is filled by D1900. Residues 2165 to 2204 (KQAKGDGSKPWKDNGVYLISGGAGGLGHIFAKEIAEQTKN) form a WD 3 repeat. Residues 2448-2525 (SLLDKVKAML…AFGKHLSEEY (78 aa)) enclose the Carrier 2 domain. S2485 is modified (O-(pantetheine 4'-phosphoryl)serine). The Ketosynthase family 3 (KS3) 2 domain maps to 2576-3012 (PEPIAIVGIS…GVNAHVIIEE (437 aa)). Active-site for beta-ketoacyl synthase 2 activity residues include C2747, H2882, and H2928. A coiled-coil region spans residues 3038–3109 (KNEARLKEHA…AAEKSGVEDV (72 aa)). The tract at residues 3207–3332 (HPLMHQNTSN…GSAVLNPAEN (126 aa)) is N-terminal hotdog fold 2. Positions 3207–3492 (HPLMHQNTSN…FRAAEGGSGS (286 aa)) constitute a PKS/mFAS DH 2 domain. The active-site Proton acceptor; for dehydratase activity 2 is H3236. Residues 3346–3492 (QESHFSVNEV…FRAAEGGSGS (147 aa)) are C-terminal hotdog fold 2. Residue D3408 is the Proton donor; for dehydratase activity 2 of the active site. A coiled-coil region spans residues 3626 to 3655 (DSHENVESVIEKLKENKRHTEDQHIKYEKG). The stretch at 3666-3705 (QIDDREISMPWRDKGVYLITGGAGGLGFIFAKEIARQAEQ) is one WD 4 repeat. In terms of domain architecture, Carrier 3 spans 3952–4026 (DHIQEVLKQT…AFAGYLSEEY (75 aa)). O-(pantetheine 4'-phosphoryl)serine is present on S3986. The Ketosynthase family 3 (KS3) 3 domain maps to 4076-4511 (PEPIAIVGMS…GVNAHVVIEE (436 aa)). Active-site for beta-ketoacyl synthase 3 activity residues include C4245, H4380, and H4427. The interval 4706–4830 (HPLIHVNTSD…GSASIRGAGD (125 aa)) is N-terminal hotdog fold 3. Residues 4706-4988 (HPLIHVNTSD…SRLLEEGIQP (283 aa)) enclose the PKS/mFAS DH 3 domain. H4735 functions as the Proton acceptor; for dehydratase activity 3 in the catalytic mechanism. Residues 4844–4988 (SLSTLSHDQC…SRLLEEGIQP (145 aa)) form a C-terminal hotdog fold 3 region. D4906 functions as the Proton donor; for dehydratase activity 3 in the catalytic mechanism. Residues 5206 to 5244 (HNNQPVHTKYKHGGVYVVIGGAGGIGEAWSEYMIRTYQA) form a WD 5 repeat. Residues 5275–5303 (IQADAANREELERAYETMKQTHREINGII) are a coiled coil.

This sequence belongs to the ATP-dependent AMP-binding enzyme family. Pantetheine 4'-phosphate serves as cofactor.

The protein localises to the cytoplasm. The protein operates within antibiotic biosynthesis; bacillaene biosynthesis. Involved in some intermediate steps for the synthesis of the antibiotic polyketide bacillaene which is involved in secondary metabolism. This is Polyketide synthase PksN (pksN) from Bacillus subtilis (strain 168).